A 60-amino-acid polypeptide reads, in one-letter code: Beta-toxin BotIT2 (60 aa).

The LCN-type CS-alpha/beta domain occupies 1–60 (DGYIKGYKGCKITCVINDDYCDTECKAEGGTYGYCWKWGLACWCEDLPDEKRWKSETNTC). Intrachain disulfides connect cysteine 10/cysteine 60, cysteine 14/cysteine 35, cysteine 21/cysteine 42, and cysteine 25/cysteine 44.

The protein belongs to the long (4 C-C) scorpion toxin superfamily. Sodium channel inhibitor family. Beta subfamily. Expressed by the venom gland.

The protein localises to the secreted. In terms of biological role, beta toxins bind voltage-independently at site-4 of sodium channels (Nav) and shift the voltage of activation toward more negative potentials thereby affecting sodium channel activation and promoting spontaneous and repetitive firing. This toxin specifically acts by inducing a new current with very slow activation/deactivation kinetics due to the transformation of normal fast channels into slow ones. It possess properties of excitatory and depressant toxins. It is highly active on insects and less active on mammals. The chain is Beta-toxin BotIT2 from Buthus occitanus tunetanus (Common European scorpion).